Here is a 341-residue protein sequence, read N- to C-terminus: Methionine import ATP-binding protein MetN 2 (341 aa).

The ABC transporter domain occupies 2–241 (IELKEVVKEY…PQHAVTKRFV (240 aa)). 38–45 (GFSGAGKS) is a binding site for ATP.

This sequence belongs to the ABC transporter superfamily. Methionine importer (TC 3.A.1.24) family. The complex is composed of two ATP-binding proteins (MetN), two transmembrane proteins (MetI) and a solute-binding protein (MetQ).

The protein resides in the cell membrane. The enzyme catalyses L-methionine(out) + ATP + H2O = L-methionine(in) + ADP + phosphate + H(+). The catalysed reaction is D-methionine(out) + ATP + H2O = D-methionine(in) + ADP + phosphate + H(+). Its function is as follows. Part of the ABC transporter complex MetNIQ involved in methionine import. Responsible for energy coupling to the transport system. The protein is Methionine import ATP-binding protein MetN 2 of Staphylococcus aureus (strain MRSA252).